The sequence spans 141 residues: Large ribosomal subunit protein uL11 (141 aa).

It belongs to the universal ribosomal protein uL11 family. As to quaternary structure, part of the ribosomal stalk of the 50S ribosomal subunit. Interacts with L10 and the large rRNA to form the base of the stalk. L10 forms an elongated spine to which L12 dimers bind in a sequential fashion forming a multimeric L10(L12)X complex. Post-translationally, one or more lysine residues are methylated.

Functionally, forms part of the ribosomal stalk which helps the ribosome interact with GTP-bound translation factors. In Agathobacter rectalis (strain ATCC 33656 / DSM 3377 / JCM 17463 / KCTC 5835 / VPI 0990) (Eubacterium rectale), this protein is Large ribosomal subunit protein uL11.